The primary structure comprises 239 residues: Glutathione S-transferase verG (239 aa).

Residues 18 to 101 (KPLIFVMEGR…YLSNKYDAKR (84 aa)) enclose the GST N-terminal domain. The region spanning 107 to 237 (NAAENLEICN…ELDSRKEIAI (131 aa)) is the GST C-terminal domain.

This sequence belongs to the GST superfamily.

The catalysed reaction is RX + glutathione = an S-substituted glutathione + a halide anion + H(+). It participates in mycotoxin biosynthesis. Functionally, glutathione S-transferase; part of the gene cluster that mediates the biosynthesis of 11'-deoxyverticillin A, one of the dimeric epipolythiodioxopiperazines (ETPs) from the verticillin family that act as mycotoxins. 11'-deoxyverticillin A is required for normal conidiation. The nonribosomal peptide synthetase verP is speculated to be responsible for condensation of amino acids to form the carbon skeleton of verticillin, whereas the cluster-specific tailoring enzymes are involved in further modifications leading to the production of 11'-deoxyverticillin A. The chain is Glutathione S-transferase verG from Clonostachys rogersoniana.